Reading from the N-terminus, the 346-residue chain is Protein RecA (346 aa).

65–72 (GPESSGKT) is an ATP binding site.

Belongs to the RecA family.

It localises to the cytoplasm. Can catalyze the hydrolysis of ATP in the presence of single-stranded DNA, the ATP-dependent uptake of single-stranded DNA by duplex DNA, and the ATP-dependent hybridization of homologous single-stranded DNAs. It interacts with LexA causing its activation and leading to its autocatalytic cleavage. The sequence is that of Protein RecA from Enterococcus hirae (strain ATCC 9790 / DSM 20160 / JCM 8729 / LMG 6399 / NBRC 3181 / NCIMB 6459 / NCDO 1258 / NCTC 12367 / WDCM 00089 / R).